A 769-amino-acid chain; its full sequence is Post-GPI attachment to proteins factor 6 (769 aa).

A signal peptide spans 1–33; that stretch reads MGRVGAGGTAREAATGSLLLLLLLLARPPPAAA. Residues 34–543 lie on the Extracellular side of the membrane; that stretch reads SNSKESEAGL…STAQTVAQQR (510 aa). N138 and N411 each carry an N-linked (GlcNAc...) asparagine glycan. Residues 495–531 enclose the EGF-like domain; that stretch reads PCLNDCGPYGQCLLLRRYGYVYAGCSCKAGWRGWSCT. 3 disulfide bridges follow: C496–C506, C500–C519, and C521–C530. A helical transmembrane segment spans residues 544 to 564; the sequence is AAALLLTLSNLMFLAPIAISL. At 565 to 567 the chain is on the cytoplasmic side; sequence HRS. A helical transmembrane segment spans residues 568-588; the sequence is FLVEASVYFYTMFFSTFYHAC. The Extracellular portion of the chain corresponds to 589–603; it reads DQPGEAVLCILSYDT. A helical membrane pass occupies residues 604–624; it reads LQYCDFLGSGASTWVTILCMA. Topologically, residues 625 to 627 are cytoplasmic; the sequence is RLK. The helical transmembrane segment at 628 to 648 threads the bilayer; sequence TILKQVLLVLGTLVIAMSLQM. Residues 649-651 lie on the Extracellular side of the membrane; it reads DRR. Residues 652–672 form a helical membrane-spanning segment; that stretch reads GIWNLMGPCVFAFVIMASMWI. At 673–688 the chain is on the cytoplasmic side; sequence YRCGHRGQCYPTSWQR. Residues 689–709 form a helical membrane-spanning segment; sequence WVFYLLPGISMASVGIAMYTS. The Extracellular portion of the chain corresponds to 710 to 715; that stretch reads MMTSDN. The chain crosses the membrane as a helical span at residues 716 to 736; the sequence is YYYTHSIWHILLAGSAAFLLP. Topologically, residues 737-769 are cytoplasmic; sequence PREEKAGSWACLQKFPCHYQICRNDRDELYTVT.

The protein belongs to the TMEM8 family. Glycosylated.

It localises to the cell membrane. Its subcellular location is the lysosome membrane. The catalysed reaction is a 1,2-diacyl-sn-glycero-3-phosphocholine + H2O = a 1-acyl-sn-glycero-3-phosphocholine + a fatty acid + H(+). In terms of biological role, involved in the lipid remodeling steps of GPI-anchor maturation. Lipid remodeling steps consist in the generation of 2 saturated fatty chains at the sn-2 position of GPI-anchor proteins (GPI-AP). Has phospholipase A2 activity that removes an acyl-chain at the sn-2 position of GPI-anchors during the remodeling of GPI. Required for the shedding of the GPI-AP CRIPTO, but not CFC1, at the cell surface. Shedding of CRIPTO modulates Nodal signaling by allowing soluble CRIPTO to act as a Nodal coreceptor on other cells. Also indirectly involved in the translocation of RAC1 from the cytosol to the plasma membrane by maintaining the steady state amount of CAV1-enriched plasma membrane subdomains, stabilizing RAC1 at the plasma membrane. This chain is Post-GPI attachment to proteins factor 6, found in Mus musculus (Mouse).